Reading from the N-terminus, the 224-residue chain is MGRAVCLCSGGLDSTVAATIARRSGMDVYLIHVSYGQQAERREIEAIERIADAIGASDLMCSRIDLFRNISALTTQGARIPRGEEVSLDSESTPPTWVYCRNTVLLSMAAAYAEYLGAHSIYVGFNAEEAMSYPDNRPEFVEQFNALLEKAVASFSRPPKVVAPLVDMRKKDIVRLGADIKAPLELTWSCYLNGEIHCGTCESCQHRRRGFVEAGIPDPTEYQH.

8-18 (CSGGLDSTVAA) lines the ATP pocket. Zn(2+) is bound by residues C190, C198, C201, and C204.

This sequence belongs to the QueC family. Zn(2+) serves as cofactor.

It carries out the reaction 7-carboxy-7-deazaguanine + NH4(+) + ATP = 7-cyano-7-deazaguanine + ADP + phosphate + H2O + H(+). It functions in the pathway purine metabolism; 7-cyano-7-deazaguanine biosynthesis. In terms of biological role, catalyzes the ATP-dependent conversion of 7-carboxy-7-deazaguanine (CDG) to 7-cyano-7-deazaguanine (preQ(0)). This Methanothrix thermoacetophila (strain DSM 6194 / JCM 14653 / NBRC 101360 / PT) (Methanosaeta thermophila) protein is 7-cyano-7-deazaguanine synthase.